The chain runs to 412 residues: uncharacterized protein (412 aa).

11 consecutive transmembrane segments (helical) span residues 17–37 (LLLA…ELVI), 54–74 (VLAL…PLLV), 91–111 (MIFI…FFFL), 112–132 (GRAL…AVVG), 146–166 (LIVS…SFIG), 173–193 (WTFW…LLEM), 225–245 (VYIT…SFLG), 257–277 (TAAG…VITG), 299–319 (LLAC…SLFI), 346–366 (VMVF…ALMG), and 375–395 (AAVG…SVFA).

Belongs to the major facilitator superfamily.

It localises to the cell membrane. This is an uncharacterized protein from Bacillus subtilis (strain 168).